The chain runs to 328 residues: Ribosomal RNA small subunit methyltransferase H (328 aa).

S-adenosyl-L-methionine is bound by residues Gly35 to His37, Asp60, Phe87, Asp113, and Gln120.

The protein belongs to the methyltransferase superfamily. RsmH family.

The protein localises to the cytoplasm. The enzyme catalyses cytidine(1402) in 16S rRNA + S-adenosyl-L-methionine = N(4)-methylcytidine(1402) in 16S rRNA + S-adenosyl-L-homocysteine + H(+). Functionally, specifically methylates the N4 position of cytidine in position 1402 (C1402) of 16S rRNA. The protein is Ribosomal RNA small subunit methyltransferase H of Chlorobium chlorochromatii (strain CaD3).